The chain runs to 99 residues: Transmembrane protein 14A (99 aa).

3 consecutive transmembrane segments (helical) span residues 1-21 (MDLI…FGYK), 24-44 (GGVP…YGAY), and 79-99 (PAGL…LLLL).

This sequence belongs to the TMEM14 family. In terms of tissue distribution, expressed at significantly higher levels in ovarian cancer tissues than in normal tissues (at protein level).

The protein localises to the mitochondrion membrane. It is found in the endoplasmic reticulum membrane. Functionally, inhibits apoptosis via negative regulation of the mitochondrial outer membrane permeabilization involved in apoptotic signaling pathway. This chain is Transmembrane protein 14A (TMEM14A), found in Homo sapiens (Human).